Reading from the N-terminus, the 235-residue chain is MNKVSLLHEGKAKKVFLTDNSDLVIQEFKDDATAFNAKKKGSIQNKGVVNNAISCTLFTFLGENGIPTHYVEQLSDRDMLCKHLDIIKVEVVVRNVAAGSLVRRYGFKEGFVLETPIIELYLKDDDLDDPLMNESHAVALGLASYEELDRLKELAAAINTLLRSFFADRKLNLVDFKLEFGRHNGTILLGDEISPDTCRFWDLDSGEKMDKDRFRFDMGGVEDAYSEVQRRVLEL.

The protein belongs to the SAICAR synthetase family.

It carries out the reaction 5-amino-1-(5-phospho-D-ribosyl)imidazole-4-carboxylate + L-aspartate + ATP = (2S)-2-[5-amino-1-(5-phospho-beta-D-ribosyl)imidazole-4-carboxamido]succinate + ADP + phosphate + 2 H(+). Its pathway is purine metabolism; IMP biosynthesis via de novo pathway; 5-amino-1-(5-phospho-D-ribosyl)imidazole-4-carboxamide from 5-amino-1-(5-phospho-D-ribosyl)imidazole-4-carboxylate: step 1/2. This Prosthecochloris aestuarii (strain DSM 271 / SK 413) protein is Phosphoribosylaminoimidazole-succinocarboxamide synthase.